The chain runs to 293 residues: 33 kDa chaperonin (293 aa).

Cystine bridges form between Cys237/Cys239 and Cys271/Cys274.

This sequence belongs to the HSP33 family. Under oxidizing conditions two disulfide bonds are formed involving the reactive cysteines. Under reducing conditions zinc is bound to the reactive cysteines and the protein is inactive.

It is found in the cytoplasm. Functionally, redox regulated molecular chaperone. Protects both thermally unfolding and oxidatively damaged proteins from irreversible aggregation. Plays an important role in the bacterial defense system toward oxidative stress. This chain is 33 kDa chaperonin, found in Haemophilus influenzae (strain PittGG).